Consider the following 756-residue polypeptide: Cholesterol uptake protein 1 (756 aa).

A signal peptide spans Met1–Asn18. At Gln19–Asp268 the chain is on the extracellular side. N-linked (GlcNAc...) asparagine glycosylation is found at Asn39 and Asn63. Positions Val124–Arg129 match the Cholesterol-binding sequence motif motif. Residues Asn140, Asn174, and Asn257 are each glycosylated (N-linked (GlcNAc...) asparagine). Residues Tyr269–Val289 form a helical membrane-spanning segment. The Cytoplasmic segment spans residues Tyr290–Val373. Residues Tyr374–Ile394 traverse the membrane as a helical segment. Topologically, residues Ser395–Tyr421 are extracellular. Residues Phe422 to Ile442 form a helical membrane-spanning segment. At Val443–Gly473 the chain is on the cytoplasmic side. Residues Leu474–Val494 traverse the membrane as a helical segment. The Extracellular portion of the chain corresponds to Cys495–Asn498. A helical membrane pass occupies residues Ile499–Leu517. Topologically, residues Lys518–Ser530 are cytoplasmic. A helical membrane pass occupies residues Ala531–Val551. Residues His552–Met554 lie on the Extracellular side of the membrane. Residues Ile555–Phe575 traverse the membrane as a helical segment. The Cholesterol-binding sequence motif motif lies at Leu570 to Lys578. At Tyr576–Arg612 the chain is on the cytoplasmic side. Residues Phe613–Ala633 form a helical membrane-spanning segment. Over His634–Asp637 the chain is Extracellular. A helical transmembrane segment spans residues Phe638–Ile658. Over Leu659–Arg671 the chain is Cytoplasmic. The helical transmembrane segment at Ala672–Gln692 threads the bilayer. The Extracellular portion of the chain corresponds to Arg693–Ala728. The helical transmembrane segment at Phe729–Met749 threads the bilayer. The Cytoplasmic segment spans residues Arg750–Phe756.

This sequence belongs to the SID1 family. As to expression, highly expressed along the intestine with expression also detected in the pharynx, especially at the terminal bulb, and in the excretory gland cells.

The protein localises to the cell membrane. The enzyme catalyses cholesterol(in) = cholesterol(out). Cholesterol-binding protein which is involved in dietary cholesterol uptake from the environment. Does not play a role in double-stranded RNA transport in contrast to other SID1 family members. This chain is Cholesterol uptake protein 1, found in Caenorhabditis elegans.